We begin with the raw amino-acid sequence, 139 residues long: UPF0251 protein Csac_0224 (139 aa).

It belongs to the UPF0251 family.

This chain is UPF0251 protein Csac_0224, found in Caldicellulosiruptor saccharolyticus (strain ATCC 43494 / DSM 8903 / Tp8T 6331).